Consider the following 274-residue polypeptide: Bis(5'-nucleosyl)-tetraphosphatase, symmetrical (274 aa).

It belongs to the Ap4A hydrolase family.

The enzyme catalyses P(1),P(4)-bis(5'-adenosyl) tetraphosphate + H2O = 2 ADP + 2 H(+). In terms of biological role, hydrolyzes diadenosine 5',5'''-P1,P4-tetraphosphate to yield ADP. The protein is Bis(5'-nucleosyl)-tetraphosphatase, symmetrical (apaH) of Buchnera aphidicola subsp. Acyrthosiphon pisum (strain APS) (Acyrthosiphon pisum symbiotic bacterium).